The primary structure comprises 238 residues: tRNA1(Val) (adenine(37)-N6)-methyltransferase (238 aa).

This sequence belongs to the methyltransferase superfamily. tRNA (adenine-N(6)-)-methyltransferase family.

It is found in the cytoplasm. The enzyme catalyses adenosine(37) in tRNA1(Val) + S-adenosyl-L-methionine = N(6)-methyladenosine(37) in tRNA1(Val) + S-adenosyl-L-homocysteine + H(+). Specifically methylates the adenine in position 37 of tRNA(1)(Val) (anticodon cmo5UAC). In Shewanella putrefaciens (strain CN-32 / ATCC BAA-453), this protein is tRNA1(Val) (adenine(37)-N6)-methyltransferase.